The primary structure comprises 450 residues: uncharacterized protein (450 aa).

Belongs to the herpesviridae BBLF2 family.

This is an uncharacterized protein from Saimiriine herpesvirus 2 (strain 11) (SaHV-2).